Here is a 115-residue protein sequence, read N- to C-terminus: U3-lycotoxin-Ls1g (115 aa).

A signal peptide spans 1-20 (MKFVLLFGVFLVTLFSYSSA). The propeptide occupies 21 to 44 (EMLDDFDQADEDELLSLIEKEEAR). 4 cysteine pairs are disulfide-bonded: cysteine 48–cysteine 63, cysteine 55–cysteine 72, cysteine 62–cysteine 87, and cysteine 74–cysteine 85.

This sequence belongs to the neurotoxin 19 (CSTX) family. 01 subfamily. As to expression, expressed by the venom gland.

It is found in the secreted. This Lycosa singoriensis (Wolf spider) protein is U3-lycotoxin-Ls1g.